A 317-amino-acid polypeptide reads, in one-letter code: Serpentine receptor class delta-47 (317 aa).

Transmembrane regions (helical) follow at residues 8-28 (IFYPIFLALVFPTQIFLFVVV), 42-62 (VLFCNCIFQTISVVLLCLLQL), 89-109 (CLYFVSQSTSVVSNILVLLTI), 128-148 (IVIILLLVPVFVLVGAEIYSV), 185-205 (YLIISIVFGSVFLLPPMGLYT), 239-259 (ACLPLVSLCPIFVCYVIVIGT), and 270-290 (ISVLVLLPTFFDPYITLYSVA).

This sequence belongs to the nematode receptor-like protein srd family.

Its subcellular location is the membrane. The polypeptide is Serpentine receptor class delta-47 (srd-47) (Caenorhabditis elegans).